A 237-amino-acid chain; its full sequence is Probable transcriptional regulatory protein Bpro_2928 (237 aa).

It belongs to the TACO1 family.

It is found in the cytoplasm. The polypeptide is Probable transcriptional regulatory protein Bpro_2928 (Polaromonas sp. (strain JS666 / ATCC BAA-500)).